The sequence spans 245 residues: Probable phosphatase Spro_1934 (245 aa).

9 residues coordinate Zn(2+): His-7, His-9, His-15, His-40, Glu-73, His-101, His-131, Asp-192, and His-194.

It belongs to the PHP family. Homotrimer. Zn(2+) is required as a cofactor.

The chain is Probable phosphatase Spro_1934 from Serratia proteamaculans (strain 568).